A 125-amino-acid polypeptide reads, in one-letter code: Fluoride-specific ion channel FluC (125 aa).

The next 4 helical transmembrane spans lie at 4-24, 36-56, 68-88, and 100-120; these read PLLA…LLAV, GTLL…AWFA, LITT…LEVV, and VISV…GFWL. Residues Gly75 and Thr78 each contribute to the Na(+) site.

Belongs to the fluoride channel Fluc/FEX (TC 1.A.43) family.

Its subcellular location is the cell inner membrane. The catalysed reaction is fluoride(in) = fluoride(out). Na(+) is not transported, but it plays an essential structural role and its presence is essential for fluoride channel function. Its function is as follows. Fluoride-specific ion channel. Important for reducing fluoride concentration in the cell, thus reducing its toxicity. The protein is Fluoride-specific ion channel FluC of Erwinia tasmaniensis (strain DSM 17950 / CFBP 7177 / CIP 109463 / NCPPB 4357 / Et1/99).